A 979-amino-acid polypeptide reads, in one-letter code: Pheromone-regulated membrane protein 10 (979 aa).

5 disordered regions span residues 1 to 279 (MGKS…FFSK), 295 to 318 (LRNVNLHPEADPEKNSVQEAEVDG), 337 to 411 (YSSL…PQRV), 432 to 451 (FSTASSIGEEPAKPSKPLLD), and 491 to 528 (ATKHYPGRKNEEASGSNSELPSFKNTRPKKNKKHLPKF). Over residues 15 to 26 (GGKDARSPETRS) the composition is skewed to basic and acidic residues. Positions 29-38 (SRSSTDNRSS) are enriched in low complexity. The segment covering 54-68 (LDLEEGVDDDADFDW) has biased composition (acidic residues). Residues 77 to 86 (DAQSLDNPFN) show a composition bias toward polar residues. Basic and acidic residues predominate over residues 105-115 (AIERDAVDTIR). A compositionally biased stretch (acidic residues) spans 122–135 (EEPDSASDGEDVGM). Composition is skewed to basic and acidic residues over residues 138 to 148 (EYQRKRERLVD) and 158 to 175 (SPRRESREGKNVRFHTET). Positions 192 to 213 (EAGTGTNENGEASSSGMKSSIN) are enriched in polar residues. A compositionally biased stretch (basic and acidic residues) spans 253–263 (GAEKGMKSMKD). The segment covering 360 to 372 (SPSTPSSSPGPES) has biased composition (low complexity). Positions 379–395 (DDYDFDQVDSDGEDSDL) are enriched in acidic residues. The span at 503-515 (ASGSNSELPSFKN) shows a compositional bias: polar residues. Residues 516 to 528 (TRPKKNKKHLPKF) are compositionally biased toward basic residues. 10 helical membrane passes run 658 to 678 (WVCVLLYGFCSAMVTPYAFGG), 680 to 700 (WVNLAVSFFIGTCVGALQFIV), 710 to 730 (VFEISASIVVSFVGRAFGSIG), 734 to 754 (ICFGAVTQGSLALILPGYIIL), 773 to 793 (FYAIIYSLFLSFGITLGAALF), 809 to 829 (PISPWYRFLFVPAFTIGISLI), 832 to 852 (AHWIQLPVMVTISCTGYVVTY), 864 to 884 (FTASLAAFVIGIMGNLYSRVW), 886 to 906 (GLAVSAMLPAIFVQVPSGVAS), and 946 to 966 (ITMIQVSIGITVGLFGSSLIV).

The protein belongs to the ThrE exporter (TC 2.A.79) family.

The protein localises to the membrane. In Zygosaccharomyces rouxii (strain ATCC 2623 / CBS 732 / NBRC 1130 / NCYC 568 / NRRL Y-229), this protein is Pheromone-regulated membrane protein 10.